Consider the following 339-residue polypeptide: tRNA N6-adenosine threonylcarbamoyltransferase (339 aa).

2 residues coordinate Fe cation: His-117 and His-121. Residues 140 to 144 (VVSGG), Asp-173, Gly-186, and Asn-279 each bind substrate. A Fe cation-binding site is contributed by Asp-307.

Belongs to the KAE1 / TsaD family. The cofactor is Fe(2+).

It localises to the cytoplasm. The enzyme catalyses L-threonylcarbamoyladenylate + adenosine(37) in tRNA = N(6)-L-threonylcarbamoyladenosine(37) in tRNA + AMP + H(+). In terms of biological role, required for the formation of a threonylcarbamoyl group on adenosine at position 37 (t(6)A37) in tRNAs that read codons beginning with adenine. Is involved in the transfer of the threonylcarbamoyl moiety of threonylcarbamoyl-AMP (TC-AMP) to the N6 group of A37, together with TsaE and TsaB. TsaD likely plays a direct catalytic role in this reaction. The protein is tRNA N6-adenosine threonylcarbamoyltransferase of Syntrophomonas wolfei subsp. wolfei (strain DSM 2245B / Goettingen).